We begin with the raw amino-acid sequence, 386 residues long: Cytotoxic granule associated RNA binding protein TIA1 (386 aa).

Position 1 is an N-acetylmethionine (M1). RRM domains follow at residues 7–83, 106–184, and 214–286; these read KTLY…WATT, FHVF…WATR, and CTVY…WGKE. Positions 354-386 are disordered; the sequence is MGPNYGVQPPQGQNGSMLPNQPSGYRVAGYETQ. The span at 363–376 shows a compositional bias: polar residues; that stretch reads PQGQNGSMLPNQPS.

Homooligomer; homooligomerization is induced by Zn(2+). Interacts with FASTK; the interactions leads to its phosphorylation. Interacts (via RRM1 and the C-terminal glutamine-rich (Q) sequence) with SNRPC/U1-C (via N-terminus); thereby facilitating spliceosomal U1 snRNP recruitment to 5' splice sites. In terms of processing, phosphorylated by FASTK; phosphorylation occurs after FAS ligation in FAS-mediated apoptosis and before DNA fragmentation. In terms of tissue distribution, expressed in heart, small intestine, kidney, liver, lung, skeletal muscle, testes, pancreas, and ovary (at protein level).

It is found in the nucleus. The protein localises to the cytoplasm. The protein resides in the stress granule. RNA-binding protein involved in the regulation of alternative pre-RNA splicing and mRNA translation by binding to uridine-rich (U-rich) RNA sequences. Binds to U-rich sequences immediately downstream from a 5' splice sites in a uridine-rich small nuclear ribonucleoprotein (U snRNP)-dependent fashion, thereby modulating alternative pre-RNA splicing. Preferably binds to the U-rich IAS1 sequence in a U1 snRNP-dependent manner; this binding is optimal if a 5' splice site is adjacent to IAS1. Activates the use of heterologous 5' splice sites; the activation depends on the intron sequence downstream from the 5' splice site, with a preference for a downstream U-rich sequence. By interacting with SNRPC/U1-C, promotes recruitment and binding of spliceosomal U1 snRNP to 5' splice sites followed by U-rich sequences, thereby facilitating atypical 5' splice site recognition by U1 snRNP. Activates splicing of alternative exons with weak 5' splice sites followed by a U-rich stretch on its own pre-mRNA and on TIAR mRNA. Acts as a modulator of alternative splicing for the apoptotic FAS receptor, thereby promoting apoptosis. Binds to the 5' splice site region of FAS intron 5 to promote accumulation of transcripts that include exon 6 at the expense of transcripts in which exon 6 is skipped, thereby leading to the transcription of a membrane-bound apoptotic FAS receptor, which promotes apoptosis. Binds to a conserved AU-rich cis element in COL2A1 intron 2 and modulates alternative splicing of COL2A1 exon 2. Also binds to the equivalent AT-rich element in COL2A1 genomic DNA, and may thereby be involved in the regulation of transcription. Binds specifically to a polypyrimidine-rich controlling element (PCE) located between the weak 5' splice site and the intronic splicing silencer of CFTR mRNA to promote exon 9 inclusion, thereby antagonizing PTB1 and its role in exon skipping of CFTR exon 9. Involved in the repression of mRNA translation by binding to AU-rich elements (AREs) located in mRNA 3' untranslated regions (3' UTRs), including target ARE-bearing mRNAs encoding TNF and PTGS2. Also participates in the cellular response to environmental stress, by acting downstream of the stress-induced phosphorylation of EIF2S1/EIF2A to promote the recruitment of untranslated mRNAs to cytoplasmic stress granules (SGs), leading to stress-induced translational arrest. Formation and recruitment to SGs is regulated by Zn(2+). Possesses nucleolytic activity against cytotoxic lymphocyte target cells. Its function is as follows. Displays enhanced splicing regulatory activity compared with TIA isoform Long. The chain is Cytotoxic granule associated RNA binding protein TIA1 (TIA1) from Homo sapiens (Human).